A 163-amino-acid polypeptide reads, in one-letter code: Large ribosomal subunit protein uL15 (163 aa).

The protein belongs to the universal ribosomal protein uL15 family. Part of the 50S ribosomal subunit.

In terms of biological role, binds to the 23S rRNA. This is Large ribosomal subunit protein uL15 from Orientia tsutsugamushi (strain Ikeda) (Rickettsia tsutsugamushi).